The primary structure comprises 205 residues: dTTP/UTP pyrophosphatase (205 aa).

Residue aspartate 66 is the Proton acceptor of the active site.

Belongs to the Maf family. YhdE subfamily. Requires a divalent metal cation as cofactor.

The protein localises to the cytoplasm. It carries out the reaction dTTP + H2O = dTMP + diphosphate + H(+). The catalysed reaction is UTP + H2O = UMP + diphosphate + H(+). Functionally, nucleoside triphosphate pyrophosphatase that hydrolyzes dTTP and UTP. May have a dual role in cell division arrest and in preventing the incorporation of modified nucleotides into cellular nucleic acids. The chain is dTTP/UTP pyrophosphatase from Anaeromyxobacter sp. (strain Fw109-5).